Consider the following 177-residue polypeptide: ATP-dependent protease subunit HslV (177 aa).

The active site involves Thr-2. Na(+) contacts are provided by Ala-159, Asp-162, and Thr-165.

The protein belongs to the peptidase T1B family. HslV subfamily. A double ring-shaped homohexamer of HslV is capped on each side by a ring-shaped HslU homohexamer. The assembly of the HslU/HslV complex is dependent on binding of ATP.

It is found in the cytoplasm. It catalyses the reaction ATP-dependent cleavage of peptide bonds with broad specificity.. Allosterically activated by HslU binding. Functionally, protease subunit of a proteasome-like degradation complex believed to be a general protein degrading machinery. The chain is ATP-dependent protease subunit HslV from Lactobacillus leichmannii.